The following is a 503-amino-acid chain: D-alanine--D-alanyl carrier protein ligase (503 aa).

151-152 (TS) serves as a coordination point for ATP. Asp-196 contacts D-alanine. Residue 291–296 (NTYGPT) coordinates ATP. Val-300 contacts D-alanine. ATP contacts are provided by Asp-382 and Lys-491. Lys-491 contacts D-alanine.

Belongs to the ATP-dependent AMP-binding enzyme family. DltA subfamily.

The protein localises to the cytoplasm. It carries out the reaction holo-[D-alanyl-carrier protein] + D-alanine + ATP = D-alanyl-[D-alanyl-carrier protein] + AMP + diphosphate. Its pathway is cell wall biogenesis; lipoteichoic acid biosynthesis. Catalyzes the first step in the D-alanylation of lipoteichoic acid (LTA), the activation of D-alanine and its transfer onto the D-alanyl carrier protein (Dcp) DltC. In an ATP-dependent two-step reaction, forms a high energy D-alanyl-AMP intermediate, followed by transfer of the D-alanyl residue as a thiol ester to the phosphopantheinyl prosthetic group of the Dcp. D-alanylation of LTA plays an important role in modulating the properties of the cell wall in Gram-positive bacteria, influencing the net charge of the cell wall. The protein is D-alanine--D-alanyl carrier protein ligase of Bacillus velezensis (strain DSM 23117 / BGSC 10A6 / LMG 26770 / FZB42) (Bacillus amyloliquefaciens subsp. plantarum).